The chain runs to 372 residues: tRNA-specific 2-thiouridylase MnmA (372 aa).

Residues 16–23 (GMSGGVDS) and Met42 contribute to the ATP site. Positions 102–104 (NPD) are interaction with target base in tRNA. Residue Cys107 is the Nucleophile of the active site. Residues Cys107 and Cys205 are joined by a disulfide bond. Gly132 is an ATP binding site. Positions 155–157 (KDQ) are interaction with tRNA. Cys205 serves as the catalytic Cysteine persulfide intermediate. Positions 317–318 (RY) are interaction with tRNA.

This sequence belongs to the MnmA/TRMU family.

It is found in the cytoplasm. It catalyses the reaction S-sulfanyl-L-cysteinyl-[protein] + uridine(34) in tRNA + AH2 + ATP = 2-thiouridine(34) in tRNA + L-cysteinyl-[protein] + A + AMP + diphosphate + H(+). Functionally, catalyzes the 2-thiolation of uridine at the wobble position (U34) of tRNA, leading to the formation of s(2)U34. This is tRNA-specific 2-thiouridylase MnmA from Shewanella sp. (strain ANA-3).